Reading from the N-terminus, the 323-residue chain is Phosphatidylglycerol--prolipoprotein diacylglyceryl transferase (323 aa).

3 helical membrane-spanning segments follow: residues 15-35 (VIQG…ILIS), 58-78 (FMFS…TLVY), and 106-126 (GMAI…TINT). A 1,2-diacyl-sn-glycero-3-phospho-(1'-sn-glycerol) is bound at residue arginine 156. 2 helical membrane passes run 242–262 (GFIF…IEYL) and 289–309 (ISMG…WIIV).

It belongs to the Lgt family.

It is found in the cell inner membrane. It carries out the reaction L-cysteinyl-[prolipoprotein] + a 1,2-diacyl-sn-glycero-3-phospho-(1'-sn-glycerol) = an S-1,2-diacyl-sn-glyceryl-L-cysteinyl-[prolipoprotein] + sn-glycerol 1-phosphate + H(+). It functions in the pathway protein modification; lipoprotein biosynthesis (diacylglyceryl transfer). Functionally, catalyzes the transfer of the diacylglyceryl group from phosphatidylglycerol to the sulfhydryl group of the N-terminal cysteine of a prolipoprotein, the first step in the formation of mature lipoproteins. This Borreliella afzelii (strain PKo) (Borrelia afzelii) protein is Phosphatidylglycerol--prolipoprotein diacylglyceryl transferase.